We begin with the raw amino-acid sequence, 126 residues long: Profilin-3 (126 aa).

It belongs to the profilin family. As to quaternary structure, occurs in many kinds of cells as a complex with monomeric actin in a 1:1 ratio. In embryos, expression is specifically detected in body wall muscle cells. In adults, expression is localized to a striking dot-like fashion in body wall muscle.

It localises to the cytoplasm. It is found in the cytoskeleton. In terms of biological role, binds to actin and affects the structure of the cytoskeleton. At high concentrations, profilin prevents the polymerization of actin, whereas it enhances it at low concentrations. By binding to PIP2, it inhibits the formation of IP3 and DG. Also binds to poly(L-proline) and phosphatidylinositol 4,5-bisphosphate micelles. In Caenorhabditis elegans, this protein is Profilin-3 (pfn-3).